Here is a 154-residue protein sequence, read N- to C-terminus: Minor structural pilin EpdC (154 aa).

Positions 1-13 (MIKMLQLPFNKKG) are excised as a propeptide. A QXSXEXXXL motif is present at residues 14 to 24 (QVSFDFIIAML).

Post-translationally, the N-terminus is cleaved by the prepilin peptidase EppA, which recognizes the class III signal sequence.

It is found in the secreted. Its subcellular location is the cell surface. The protein resides in the fimbrium. Its function is as follows. Minor component of the type IV-like pili. Essential for pili formation. This is Minor structural pilin EpdC from Methanococcus maripaludis (strain DSM 14266 / JCM 13030 / NBRC 101832 / S2 / LL).